The primary structure comprises 308 residues: Elongation factor Ts (308 aa).

The involved in Mg(2+) ion dislocation from EF-Tu stretch occupies residues 80–83; sequence TDFV.

This sequence belongs to the EF-Ts family.

It is found in the cytoplasm. Associates with the EF-Tu.GDP complex and induces the exchange of GDP to GTP. It remains bound to the aminoacyl-tRNA.EF-Tu.GTP complex up to the GTP hydrolysis stage on the ribosome. This Verminephrobacter eiseniae (strain EF01-2) protein is Elongation factor Ts.